The following is a 492-amino-acid chain: NADH-quinone oxidoreductase subunit N (492 aa).

The next 14 helical transmembrane spans lie at 13–33, 43–63, 82–102, 110–132, 136–155, 169–189, 210–230, 245–265, 272–292, 306–326, 331–351, 377–397, 410–430, and 457–477; these read MLPVLLVLVGAIVSTLGGFWL, ILFVLASGASLVWLWGGAPWA, AALLLGGTVLLGALLTLLVSL, VSFAEFDALLMYAVTGCLLIAFS, IVMLIGLEIMSLASYVLATL, FLLGSVGSAILIYGLAFLYGA, IGILVTGTLLVLSGFGVKIAL, PTLVSLFLSTVVKVAAFAGML, LAAGPGWHSVLQILVALTLVI, LLAYSAVAHTGFLAMTLLGDT, AALGYYLLVYTLMTVGALAVV, AVALAFCLASLAGLPPFAGFF, GYLLISVLAVLSSVAALVYYL, and VAVALSLIGIVVLGLLPNLWY.

This sequence belongs to the complex I subunit 2 family. NDH-1 is composed of 15 different subunits. Subunits NuoA, H, J, K, L, M, N constitute the membrane sector of the complex.

The protein resides in the cell membrane. It carries out the reaction a quinone + NADH + 5 H(+)(in) = a quinol + NAD(+) + 4 H(+)(out). In terms of biological role, NDH-1 shuttles electrons from NADH, via FMN and iron-sulfur (Fe-S) centers, to quinones in the respiratory chain. The immediate electron acceptor for the enzyme in this species is believed to be a menaquinone. Couples the redox reaction to proton translocation (for every two electrons transferred, four hydrogen ions are translocated across the cytoplasmic membrane), and thus conserves the redox energy in a proton gradient. This Deinococcus radiodurans (strain ATCC 13939 / DSM 20539 / JCM 16871 / CCUG 27074 / LMG 4051 / NBRC 15346 / NCIMB 9279 / VKM B-1422 / R1) protein is NADH-quinone oxidoreductase subunit N.